The primary structure comprises 317 residues: Beta-ketoacyl-[acyl-carrier-protein] synthase III (317 aa).

Active-site residues include Cys112 and His244. The segment at 245–249 (QANLR) is ACP-binding. Asn274 is an active-site residue.

Belongs to the thiolase-like superfamily. FabH family. Homodimer.

The protein resides in the cytoplasm. The enzyme catalyses malonyl-[ACP] + acetyl-CoA + H(+) = 3-oxobutanoyl-[ACP] + CO2 + CoA. It functions in the pathway lipid metabolism; fatty acid biosynthesis. Catalyzes the condensation reaction of fatty acid synthesis by the addition to an acyl acceptor of two carbons from malonyl-ACP. Catalyzes the first condensation reaction which initiates fatty acid synthesis and may therefore play a role in governing the total rate of fatty acid production. Possesses both acetoacetyl-ACP synthase and acetyl transacylase activities. Its substrate specificity determines the biosynthesis of branched-chain and/or straight-chain of fatty acids. In Serratia proteamaculans (strain 568), this protein is Beta-ketoacyl-[acyl-carrier-protein] synthase III.